Reading from the N-terminus, the 701-residue chain is Elongation factor G (701 aa).

The region spanning 6–286 (KFTRNIGIAA…YVMELLPSPL (281 aa)) is the tr-type G domain. GTP is bound by residues 15-22 (AHIDAGKT), 83-87 (DTPGH), and 137-140 (NKMD).

It belongs to the TRAFAC class translation factor GTPase superfamily. Classic translation factor GTPase family. EF-G/EF-2 subfamily.

It is found in the cytoplasm. Catalyzes the GTP-dependent ribosomal translocation step during translation elongation. During this step, the ribosome changes from the pre-translocational (PRE) to the post-translocational (POST) state as the newly formed A-site-bound peptidyl-tRNA and P-site-bound deacylated tRNA move to the P and E sites, respectively. Catalyzes the coordinated movement of the two tRNA molecules, the mRNA and conformational changes in the ribosome. This is Elongation factor G from Cytophaga hutchinsonii (strain ATCC 33406 / DSM 1761 / CIP 103989 / NBRC 15051 / NCIMB 9469 / D465).